We begin with the raw amino-acid sequence, 101 residues long: NADH-ubiquinone oxidoreductase chain 5 (101 aa).

The next 3 membrane-spanning stretches (helical) occupy residues 12–32, 48–68, and 79–99; these read IALFTVFIIDIIKFYILSGVI, FLFITMGFLFFIFTTWYFICF, and LVIYFRYNLKYCLFFCMLFII.

The protein belongs to the complex I subunit 5 family.

The protein localises to the mitochondrion inner membrane. It catalyses the reaction a ubiquinone + NADH + 5 H(+)(in) = a ubiquinol + NAD(+) + 4 H(+)(out). Core subunit of the mitochondrial membrane respiratory chain NADH dehydrogenase (Complex I) that is believed to belong to the minimal assembly required for catalysis. Complex I functions in the transfer of electrons from NADH to the respiratory chain. The immediate electron acceptor for the enzyme is believed to be ubiquinone. This is NADH-ubiquinone oxidoreductase chain 5 (ND5) from Leishmania tarentolae (Sauroleishmania tarentolae).